Here is a 368-residue protein sequence, read N- to C-terminus: Biotin synthase (368 aa).

Residues 46–277 enclose the Radical SAM core domain; it reads VHGDEVALCG…AAHIFVMGGR (232 aa). Residues Cys64, Cys68, and Cys71 each coordinate [4Fe-4S] cluster. [2Fe-2S] cluster-binding residues include Ser109, Cys142, and Cys202. The interval 347-368 is disordered; the sequence is RAAEPGGKRGLPVVGPPRGGCA.

This sequence belongs to the radical SAM superfamily. Biotin synthase family. As to quaternary structure, homodimer. Requires [4Fe-4S] cluster as cofactor. [2Fe-2S] cluster is required as a cofactor.

It catalyses the reaction (4R,5S)-dethiobiotin + (sulfur carrier)-SH + 2 reduced [2Fe-2S]-[ferredoxin] + 2 S-adenosyl-L-methionine = (sulfur carrier)-H + biotin + 2 5'-deoxyadenosine + 2 L-methionine + 2 oxidized [2Fe-2S]-[ferredoxin]. Its pathway is cofactor biosynthesis; biotin biosynthesis; biotin from 7,8-diaminononanoate: step 2/2. Its function is as follows. Catalyzes the conversion of dethiobiotin (DTB) to biotin by the insertion of a sulfur atom into dethiobiotin via a radical-based mechanism. In Anaeromyxobacter sp. (strain Fw109-5), this protein is Biotin synthase.